Here is a 158-residue protein sequence, read N- to C-terminus: 2-C-methyl-D-erythritol 2,4-cyclodiphosphate synthase (158 aa).

A divalent metal cation-binding residues include aspartate 9 and histidine 11. 4-CDP-2-C-methyl-D-erythritol 2-phosphate-binding positions include 9–11 and 35–36; these read DAH and HS. Residue histidine 43 coordinates a divalent metal cation. 4-CDP-2-C-methyl-D-erythritol 2-phosphate is bound by residues 57 to 59, 62 to 66, 133 to 136, phenylalanine 140, and arginine 143; these read DIG, FPDTD, and TTTE.

The protein belongs to the IspF family. In terms of assembly, homotrimer. The cofactor is a divalent metal cation.

The enzyme catalyses 4-CDP-2-C-methyl-D-erythritol 2-phosphate = 2-C-methyl-D-erythritol 2,4-cyclic diphosphate + CMP. Its pathway is isoprenoid biosynthesis; isopentenyl diphosphate biosynthesis via DXP pathway; isopentenyl diphosphate from 1-deoxy-D-xylulose 5-phosphate: step 4/6. Its function is as follows. Involved in the biosynthesis of isopentenyl diphosphate (IPP) and dimethylallyl diphosphate (DMAPP), two major building blocks of isoprenoid compounds. Catalyzes the conversion of 4-diphosphocytidyl-2-C-methyl-D-erythritol 2-phosphate (CDP-ME2P) to 2-C-methyl-D-erythritol 2,4-cyclodiphosphate (ME-CPP) with a corresponding release of cytidine 5-monophosphate (CMP). The protein is 2-C-methyl-D-erythritol 2,4-cyclodiphosphate synthase of Methylococcus capsulatus (strain ATCC 33009 / NCIMB 11132 / Bath).